An 82-amino-acid chain; its full sequence is EMBRYO SURROUNDING FACTOR 1-like protein 10 (82 aa).

Positions 1–22 are cleaved as a signal peptide; that stretch reads MSSLYFAILCLFMIFLVPLHEF. 4 disulfides stabilise this stretch: C39–C55, C44–C74, C53–C70, and C56–C63.

Belongs to the MEG family. In terms of tissue distribution, expressed in stems, leaves and flowers.

The polypeptide is EMBRYO SURROUNDING FACTOR 1-like protein 10 (ESFL10) (Arabidopsis thaliana (Mouse-ear cress)).